An 813-amino-acid chain; its full sequence is Ribonuclease R (813 aa).

The RNB domain occupies 260–587 (RVDLRDLPLV…LHRAIKYLLA (328 aa)). The residue at position 544 (lysine 544) is an N6-acetyllysine. Residues 644-725 (GNVFKGVISS…DERKIDFSLI (82 aa)) form the S1 motif domain. The segment at 733 to 813 (NVGKTAREKA…KRAAKKKVAE (81 aa)) is disordered. Composition is skewed to basic and acidic residues over residues 737 to 749 (TAREKAKKGDAGK) and 761 to 774 (VNFEPDSAFRGEKK). A compositionally biased stretch (basic residues) spans 775 to 791 (TKPKAAKKDARKAKKPS). Residues 792–801 (AKTQKIAAAT) are compositionally biased toward low complexity. Residues 802–813 (KAKRAAKKKVAE) show a composition bias toward basic residues.

It belongs to the RNR ribonuclease family. RNase R subfamily. As to quaternary structure, monomer.

The protein localises to the cytoplasm. The enzyme catalyses Exonucleolytic cleavage in the 3'- to 5'-direction to yield nucleoside 5'-phosphates.. 3'-5' exoribonuclease that releases 5'-nucleoside monophosphates and is involved in maturation of structured RNAs. Required for the expression of virulence genes on the large plasmid of S.flexneri at the post-transcriptional level. In Shigella flexneri, this protein is Ribonuclease R.